The primary structure comprises 126 residues: 3-aminoacrylate deaminase RutC (126 aa).

The protein belongs to the RutC family.

The enzyme catalyses (Z)-3-aminoacrylate + H2O + H(+) = 3-oxopropanoate + NH4(+). Functionally, involved in pyrimidine catabolism. Catalyzes the deamination of 3-aminoacrylate to malonic semialdehyde, a reaction that can also occur spontaneously. RutC may facilitate the reaction and modulate the metabolic fitness, rather than catalyzing essential functions. The polypeptide is 3-aminoacrylate deaminase RutC (Acinetobacter baylyi (strain ATCC 33305 / BD413 / ADP1)).